Here is a 61-residue protein sequence, read N- to C-terminus: Translational regulator CsrA (61 aa).

Belongs to the CsrA/RsmA family. In terms of assembly, homodimer; the beta-strands of each monomer intercalate to form a hydrophobic core, while the alpha-helices form wings that extend away from the core.

The protein resides in the cytoplasm. Functionally, a key translational regulator that binds mRNA to regulate translation initiation and/or mRNA stability. Mediates global changes in gene expression, shifting from rapid growth to stress survival by linking envelope stress, the stringent response and the catabolite repression systems. Usually binds in the 5'-UTR; binding at or near the Shine-Dalgarno sequence prevents ribosome-binding, repressing translation, binding elsewhere in the 5'-UTR can activate translation and/or stabilize the mRNA. Its function is antagonized by small RNA(s). The sequence is that of Translational regulator CsrA from Mannheimia succiniciproducens (strain KCTC 0769BP / MBEL55E).